The following is a 514-amino-acid chain: Ammonium transporter 1 member 2 (514 aa).

The next 11 helical transmembrane spans lie at 56–76, 91–111, 140–160, 165–185, 212–232, 257–277, 291–313, 328–348, 351–371, 380–400, and 431–451; these read LLFS…LCAG, VLDA…FAFG, FFLY…GSIA, FVAY…TVSH, FAGS…GALV, VVLG…GSFL, GQWS…AALT, IDVC…CAVV, WAAI…NLLA, LEAA…TGLF, and IVQI…LFYG. The residue at position 472 (Thr-472) is a Phosphothreonine.

This sequence belongs to the ammonia transporter channel (TC 1.A.11.2) family. High expression in root.

Its subcellular location is the membrane. In terms of biological role, ammonium transporter probably involved in ammonium uptake from the soil. The chain is Ammonium transporter 1 member 2 (AMT1-2) from Arabidopsis thaliana (Mouse-ear cress).